A 276-amino-acid polypeptide reads, in one-letter code: ADP-dependent (S)-NAD(P)H-hydrate dehydratase (276 aa).

The 268-residue stretch at 7 to 274 folds into the YjeF C-terminal domain; sequence METLNSINIP…NEIPYAMKQL (268 aa). Residues Ala42, Gly105, and His154 each contribute to the (6S)-NADPHX site. Gly216 is an AMP binding site. Position 217 (Asp217) interacts with (6S)-NADPHX.

The protein belongs to the NnrD/CARKD family. In terms of assembly, homotetramer. Requires Mg(2+) as cofactor.

It carries out the reaction (6S)-NADHX + ADP = AMP + phosphate + NADH + H(+). The catalysed reaction is (6S)-NADPHX + ADP = AMP + phosphate + NADPH + H(+). Functionally, catalyzes the dehydration of the S-form of NAD(P)HX at the expense of ADP, which is converted to AMP. Together with NAD(P)HX epimerase, which catalyzes the epimerization of the S- and R-forms, the enzyme allows the repair of both epimers of NAD(P)HX, a damaged form of NAD(P)H that is a result of enzymatic or heat-dependent hydration. The protein is ADP-dependent (S)-NAD(P)H-hydrate dehydratase of Staphylococcus aureus (strain NCTC 8325 / PS 47).